The chain runs to 538 residues: Methionine--tRNA ligase (538 aa).

The 'HIGH' region motif lies at tyrosine 21–histidine 31. Positions 137, 140, 162, and 165 each coordinate Zn(2+). Residues lysine 313 to serine 317 carry the 'KMSKS' region motif. Lysine 316 contacts ATP.

Belongs to the class-I aminoacyl-tRNA synthetase family. MetG type 2A subfamily. As to quaternary structure, monomer. Zn(2+) is required as a cofactor.

The protein resides in the cytoplasm. It catalyses the reaction tRNA(Met) + L-methionine + ATP = L-methionyl-tRNA(Met) + AMP + diphosphate. Its function is as follows. Is required not only for elongation of protein synthesis but also for the initiation of all mRNA translation through initiator tRNA(fMet) aminoacylation. The chain is Methionine--tRNA ligase from Streptomyces coelicolor (strain ATCC BAA-471 / A3(2) / M145).